The primary structure comprises 117 residues: Small ribosomal subunit protein bS16 (117 aa).

The segment covering Leu81–Pro90 has biased composition (basic residues). Residues Leu81 to Val117 form a disordered region.

The protein belongs to the bacterial ribosomal protein bS16 family.

This chain is Small ribosomal subunit protein bS16, found in Bartonella quintana (strain Toulouse) (Rochalimaea quintana).